The chain runs to 333 residues: Ketol-acid reductoisomerase (NADP(+)) (333 aa).

The KARI N-terminal Rossmann domain maps to 2–182 (AKMYYDSDAS…GCTRAGVLET (181 aa)). NADP(+) is bound by residues 25-28 (YGSQ), Arg48, Ser51, and 83-86 (DERQ). His108 is a catalytic residue. NADP(+) is bound at residue Gly134. Residues 183–328 (TFKEETETDL…AELRAMMPFI (146 aa)) form the KARI C-terminal knotted domain. Asp191, Glu195, Glu227, and Glu231 together coordinate Mg(2+). Residue Ser252 participates in substrate binding.

It belongs to the ketol-acid reductoisomerase family. Mg(2+) serves as cofactor.

It carries out the reaction (2R)-2,3-dihydroxy-3-methylbutanoate + NADP(+) = (2S)-2-acetolactate + NADPH + H(+). The enzyme catalyses (2R,3R)-2,3-dihydroxy-3-methylpentanoate + NADP(+) = (S)-2-ethyl-2-hydroxy-3-oxobutanoate + NADPH + H(+). It functions in the pathway amino-acid biosynthesis; L-isoleucine biosynthesis; L-isoleucine from 2-oxobutanoate: step 2/4. The protein operates within amino-acid biosynthesis; L-valine biosynthesis; L-valine from pyruvate: step 2/4. In terms of biological role, involved in the biosynthesis of branched-chain amino acids (BCAA). Catalyzes an alkyl-migration followed by a ketol-acid reduction of (S)-2-acetolactate (S2AL) to yield (R)-2,3-dihydroxy-isovalerate. In the isomerase reaction, S2AL is rearranged via a Mg-dependent methyl migration to produce 3-hydroxy-3-methyl-2-ketobutyrate (HMKB). In the reductase reaction, this 2-ketoacid undergoes a metal-dependent reduction by NADPH to yield (R)-2,3-dihydroxy-isovalerate. The polypeptide is Ketol-acid reductoisomerase (NADP(+)) (Desulfitobacterium hafniense (strain DSM 10664 / DCB-2)).